A 135-amino-acid polypeptide reads, in one-letter code: Transcriptional regulator HosA (135 aa).

In terms of domain architecture, HTH marR-type spans R4–N134. Positions Q48–N71 form a DNA-binding region, H-T-H motif.

Functionally, involved in the temperature-dependent positive control of flagellum-driven swimming motility and cellular aggregation. Regulates fliC expression by directly interacting with fliC promoter. The chain is Transcriptional regulator HosA (hosA) from Escherichia coli O157:H7.